Consider the following 215-residue polypeptide: Large ribosomal subunit protein uL4 (215 aa).

Residues 46–72 (TAKSKNRAEVSGGGRKPWAQKGGGRAR) form a disordered region. Residues 56-71 (SGGGRKPWAQKGGGRA) are compositionally biased toward gly residues.

Belongs to the universal ribosomal protein uL4 family. In terms of assembly, part of the 50S ribosomal subunit.

One of the primary rRNA binding proteins, this protein initially binds near the 5'-end of the 23S rRNA. It is important during the early stages of 50S assembly. It makes multiple contacts with different domains of the 23S rRNA in the assembled 50S subunit and ribosome. Its function is as follows. Forms part of the polypeptide exit tunnel. This chain is Large ribosomal subunit protein uL4, found in Helicobacter pylori (strain ATCC 700392 / 26695) (Campylobacter pylori).